The following is a 341-amino-acid chain: Foldase protein PrsA (341 aa).

An N-terminal signal peptide occupies residues Met1 to Gly22. A lipid anchor (N-palmitoyl cysteine) is attached at Cys23. Cys23 carries S-diacylglycerol cysteine lipidation. In terms of domain architecture, PpiC spans Pro199–Lys291.

It belongs to the PrsA family.

The protein resides in the cell membrane. It catalyses the reaction [protein]-peptidylproline (omega=180) = [protein]-peptidylproline (omega=0). In terms of biological role, plays a major role in protein secretion by helping the post-translocational extracellular folding of several secreted proteins. This chain is Foldase protein PrsA, found in Clostridium kluyveri (strain NBRC 12016).